We begin with the raw amino-acid sequence, 535 residues long: Bifunctional purine biosynthesis protein PurH (535 aa).

The region spanning 6–151 (TRLPIRRALI…KNHKDVAIVV (146 aa)) is the MGS-like domain.

This sequence belongs to the PurH family.

It carries out the reaction (6R)-10-formyltetrahydrofolate + 5-amino-1-(5-phospho-beta-D-ribosyl)imidazole-4-carboxamide = 5-formamido-1-(5-phospho-D-ribosyl)imidazole-4-carboxamide + (6S)-5,6,7,8-tetrahydrofolate. The catalysed reaction is IMP + H2O = 5-formamido-1-(5-phospho-D-ribosyl)imidazole-4-carboxamide. Its pathway is purine metabolism; IMP biosynthesis via de novo pathway; 5-formamido-1-(5-phospho-D-ribosyl)imidazole-4-carboxamide from 5-amino-1-(5-phospho-D-ribosyl)imidazole-4-carboxamide (10-formyl THF route): step 1/1. It functions in the pathway purine metabolism; IMP biosynthesis via de novo pathway; IMP from 5-formamido-1-(5-phospho-D-ribosyl)imidazole-4-carboxamide: step 1/1. This chain is Bifunctional purine biosynthesis protein PurH, found in Pseudomonas fluorescens (strain ATCC BAA-477 / NRRL B-23932 / Pf-5).